Here is a 562-residue protein sequence, read N- to C-terminus: Dihydroxy-acid dehydratase (562 aa).

Residue Asp-80 participates in Mg(2+) binding. Cys-121 provides a ligand contact to [2Fe-2S] cluster. The Mg(2+) site is built by Asp-122 and Lys-123. Lys-123 is subject to N6-carboxylysine. Cys-194 lines the [2Fe-2S] cluster pocket. Mg(2+) is bound at residue Glu-446. Ser-472 serves as the catalytic Proton acceptor.

Belongs to the IlvD/Edd family. As to quaternary structure, homodimer. Requires [2Fe-2S] cluster as cofactor. Mg(2+) is required as a cofactor.

The enzyme catalyses (2R)-2,3-dihydroxy-3-methylbutanoate = 3-methyl-2-oxobutanoate + H2O. It catalyses the reaction (2R,3R)-2,3-dihydroxy-3-methylpentanoate = (S)-3-methyl-2-oxopentanoate + H2O. Its pathway is amino-acid biosynthesis; L-isoleucine biosynthesis; L-isoleucine from 2-oxobutanoate: step 3/4. The protein operates within amino-acid biosynthesis; L-valine biosynthesis; L-valine from pyruvate: step 3/4. Functionally, functions in the biosynthesis of branched-chain amino acids. Catalyzes the dehydration of (2R,3R)-2,3-dihydroxy-3-methylpentanoate (2,3-dihydroxy-3-methylvalerate) into 2-oxo-3-methylpentanoate (2-oxo-3-methylvalerate) and of (2R)-2,3-dihydroxy-3-methylbutanoate (2,3-dihydroxyisovalerate) into 2-oxo-3-methylbutanoate (2-oxoisovalerate), the penultimate precursor to L-isoleucine and L-valine, respectively. This Staphylococcus aureus (strain COL) protein is Dihydroxy-acid dehydratase.